We begin with the raw amino-acid sequence, 424 residues long: DNA repair protein Rad60 (424 aa).

Residue Y26 is modified to Phosphotyrosine. S32 and S34 each carry phosphoserine. A disordered region spans residues 45-177 (LPKKSTKTGK…LTTTTSNSAS (133 aa)). A compositionally biased stretch (basic residues) spans 48-57 (KSTKTGKRKN). The span at 77-93 (QAEHKAVEPEEDMRTER) shows a compositional bias: basic and acidic residues. A Phosphoserine modification is found at S96. The span at 104–123 (EMEKKNGQQSDVEKHAKEND) shows a compositional bias: basic and acidic residues. Residues 156–166 (KPKKRGQKKRT) are compositionally biased toward basic residues. Positions 167 to 177 (SLTTTTSNSAS) are enriched in low complexity.

As to quaternary structure, forms a complex with dgrn; likely required for localization to the nuclear periphery. Interacts with the SMC5-SMC6 complex members SMC5 and SMC6/jnj following ionizing radiation (IR) to induce DNA damage. Interaction between the SMC5-SMC6 complex and the dgrn-Rad60 complex, may stabilize the association of heterochromatic DSBs with the nuclear periphery.

Its subcellular location is the nucleus. The protein resides in the nucleoplasm. In terms of biological role, required for repair of DNA double strand breaks which occur during replication or are induced by ionizing radiation (IR). Functions with dgrn and downstream of the SMC5-SMC6 complex to regulate strand break repair. Likely functions by stabilizing the association of heterochromatic double strand breaks (DSBs) with the nuclear periphery as part of the homologous recombination (HR) repair process. The chain is DNA repair protein Rad60 from Drosophila melanogaster (Fruit fly).